Consider the following 1090-residue polypeptide: Aminopeptidase-like protein AC3.5 (1090 aa).

The Cytoplasmic portion of the chain corresponds to 1-77; that stretch reads MEDVDLGKDR…KPKKRIACSP (77 aa). The span at 21–33 shows a compositional bias: low complexity; sequence GNGSASNLNNRNN. The segment at 21–71 is disordered; sequence GNGSASNLNNRNNIPLSEKAAKEPLQTQPQEAPPAPKPKVQKQKPPVKPKK. Over residues 59–71 the composition is skewed to basic residues; it reads KVQKQKPPVKPKK. The helical; Signal-anchor for type II membrane protein transmembrane segment at 78–98 threads the bilayer; it reads GSAICLFLLAVAAIIFAAFLG. Topologically, residues 99–1090 are lumenal; the sequence is HYLTKQNYEM…DEMESSEEQE (992 aa). N-linked (GlcNAc...) asparagine glycans are attached at residues N115, N123, N143, N176, and N230. The interval 217–259 is disordered; the sequence is VTKRAKKSVDSGTNSTSEMPEGSGEEAMATTATTTTTESTTPV. Positions 241–257 are enriched in low complexity; that stretch reads EEAMATTATTTTTESTT. Residues N402, N710, N723, N789, N894, N919, N964, and N993 are each glycosylated (N-linked (GlcNAc...) asparagine). Residues 1069 to 1080 show a composition bias toward basic and acidic residues; that stretch reads YLDGKMKGPAKD. Residues 1069 to 1090 are disordered; the sequence is YLDGKMKGPAKDDEMESSEEQE. Acidic residues predominate over residues 1081-1090; sequence DEMESSEEQE.

It belongs to the peptidase M1 family.

It localises to the membrane. In Caenorhabditis elegans, this protein is Aminopeptidase-like protein AC3.5.